A 329-amino-acid chain; its full sequence is Sialic acid-binding periplasmic protein SiaP (329 aa).

A signal peptide spans 1–23 (MMKLTKLFLATAISLGVSSAVLA). Residues asparagine 33, aspartate 72, glutamate 90, arginine 150, arginine 170, and asparagine 210 each contribute to the N-acetyl-beta-neuraminate site.

This sequence belongs to the bacterial solute-binding protein 7 family. As to quaternary structure, the complex comprises the extracytoplasmic solute receptor protein SiaP, and the fused transmembrane protein SiaT.

The protein resides in the periplasm. Functionally, part of the tripartite ATP-independent periplasmic (TRAP) transport system SiaPT involved in the uptake of sialic acid (N-acetyl-beta-neuraminate). This protein specifically binds sialic acid with high affinity. N-Acetylneuraminate (sialic acid) can then be incorporated into the lipooligosaccharides (LOS) as a terminal non-reducing sugar, protecting the bacterium from complement-mediated killing by normal human serum. In Haemophilus influenzae (strain ATCC 51907 / DSM 11121 / KW20 / Rd), this protein is Sialic acid-binding periplasmic protein SiaP (siaP).